The chain runs to 597 residues: MPFRELADTFERIEIITSRTQMTVLLVNLFKKTPPEIIDKVVYLLQGRLWPDWKGLPELGVGEKMLIKAIALATQSTESEVESLYKSLGDLGKAAEKLKAIYEEKLKKGAMSILAFVPVKRELTVSQVYETLSRVALATGEGSRDIKLKLLAGLLSDASPKEAKYIIRFVEGRLRLGIGDATIMDALAIVYGGGAHARPIVERAYNLRADLGHIAKILATQGLNALKGIKPQVGIPIRPMLAERLNNPVEILKKVGGIAFVEYKYDGERAQIHKLGDKIWIYSRRLENITHQYPDVVDYARKYIKANEAIVEGEIVAYDPDTGELRPFQELMHRKRKHDIHIAIKEVPVKVYLFDLLYVDGEDYTLKPLPERRAKLVEIIEQTETFQIAEYIRTNNPDELEKFFLKAIEDGAEGVMIKALHKNAIYQAGTRGWLWIKYKRDYKSEMIDTVDLVVIGAFYGRGRRGGKYGALLMASYNPDKDVFESVCKVGSGFKDEDIDKLPEMLKPYIIEHKHPRVVARMKPDVWVTPALVAEIIGAELTLSPLHTCCLDIIKPGVGISIRFPRFIRWRPDKGPEDATTSQELLEMYKRQLKKLSE.

Glu262 is an ATP binding site. Residue Lys264 is the N6-AMP-lysine intermediate of the active site. ATP-binding residues include Arg269, Arg284, Glu314, Phe354, Arg431, and Lys437.

It belongs to the ATP-dependent DNA ligase family. Mg(2+) serves as cofactor. The cofactor is Mn(2+).

The catalysed reaction is ATP + (deoxyribonucleotide)n-3'-hydroxyl + 5'-phospho-(deoxyribonucleotide)m = (deoxyribonucleotide)n+m + AMP + diphosphate.. It carries out the reaction ADP + (deoxyribonucleotide)n-3'-hydroxyl + 5'-phospho-(deoxyribonucleotide)m = (deoxyribonucleotide)n+m + AMP + phosphate.. It catalyses the reaction GTP + (deoxyribonucleotide)n-3'-hydroxyl + 5'-phospho-(deoxyribonucleotide)m = (deoxyribonucleotide)n+m + GMP + diphosphate.. Inhibited by Ca(2+) and Zn(2+). In terms of biological role, DNA ligase that seals nicks in double-stranded DNA during DNA replication, DNA recombination and DNA repair. Can use both ATP and ADP. This Staphylothermus marinus (strain ATCC 43588 / DSM 3639 / JCM 9404 / F1) protein is DNA ligase.